Reading from the N-terminus, the 369-residue chain is uncharacterized protein (369 aa).

Position 184 is an N6-(pyridoxal phosphate)lysine (Lys184).

The protein belongs to the class-V pyridoxal-phosphate-dependent aminotransferase family. Pyridoxal 5'-phosphate serves as cofactor.

This is an uncharacterized protein from Helicobacter pylori (strain J99 / ATCC 700824) (Campylobacter pylori J99).